The sequence spans 219 residues: Transcriptional regulatory protein QseB (219 aa).

Positions arginine 2–valine 116 constitute a Response regulatory domain. The residue at position 51 (aspartate 51) is a 4-aspartylphosphate. Residues serine 124–aspartate 218 constitute a DNA-binding region (ompR/PhoB-type).

In terms of processing, phosphorylated by QseC.

Its subcellular location is the cytoplasm. Its function is as follows. Member of a two-component regulatory system QseB/QseC. Activates the flagella regulon by activating transcription of flhDC. The polypeptide is Transcriptional regulatory protein QseB (qseB) (Salmonella typhimurium (strain LT2 / SGSC1412 / ATCC 700720)).